The chain runs to 204 residues: High frequency lysogenization protein HflD homolog (204 aa).

The protein belongs to the HflD family.

It localises to the cytoplasm. It is found in the cell inner membrane. In Stenotrophomonas maltophilia (strain R551-3), this protein is High frequency lysogenization protein HflD homolog.